The chain runs to 133 residues: Large-conductance mechanosensitive channel (133 aa).

The next 2 helical transmembrane spans lie at 10-30 (FAVK…GAFG) and 76-96 (GAFI…FSMV).

Belongs to the MscL family. As to quaternary structure, homopentamer.

Its subcellular location is the cell inner membrane. In terms of biological role, channel that opens in response to stretch forces in the membrane lipid bilayer. May participate in the regulation of osmotic pressure changes within the cell. This Haemophilus ducreyi (strain 35000HP / ATCC 700724) protein is Large-conductance mechanosensitive channel.